The primary structure comprises 182 residues: Large ribosomal subunit protein uL5 (182 aa).

As to quaternary structure, part of the 50S ribosomal subunit; part of the 5S rRNA/uL5/uL18/bL25 (TL7) subcomplex; has also been isolated as a complex with 5S rRNA, bL25 (TL7) and DNA binding protein II. Forms a bridge to the 30S subunit in the 70S ribosome, contacting protein uS13; this bridge is straddled by the 5S rRNA. Contacts the P site tRNA.

Its function is as follows. This is one of the proteins that bind and probably mediate the attachment of the 5S RNA into the large ribosomal subunit, where it forms part of the central protuberance. In the 70S ribosome it contacts protein S13 of the 30S subunit (forming bridge B1b) connecting the head of the 30S subunit to the top of the 50S subunit. The bridge itself contacts the P site tRNA and is implicated in movement during ribosome translocation. Also contacts the P site tRNA independently of the intersubunit bridge; the 5S rRNA and some of its associated proteins might help stabilize positioning of ribosome-bound tRNAs. The protein is Large ribosomal subunit protein uL5 (rplE) of Thermus thermophilus (strain ATCC 27634 / DSM 579 / HB8).